Consider the following 475-residue polypeptide: Sulfate adenylyltransferase subunit 1 (475 aa).

The region spanning 25–239 is the tr-type G domain; it reads KSLLRFLTCG…EVLETVEIQR (215 aa). A G1 region spans residues 34–41; that stretch reads GSVDDGKS. GTP is bound at residue 34 to 41; that stretch reads GSVDDGKS. The G2 stretch occupies residues 92 to 96; it reads GITID. A G3 region spans residues 113-116; it reads DTPG. GTP contacts are provided by residues 113–117 and 168–171; these read DTPGH and NKMD. The tract at residues 168-171 is G4; it reads NKMD. A G5 region spans residues 206 to 208; that stretch reads SAL.

This sequence belongs to the TRAFAC class translation factor GTPase superfamily. Classic translation factor GTPase family. CysN/NodQ subfamily. In terms of assembly, heterodimer composed of CysD, the smaller subunit, and CysN.

The catalysed reaction is sulfate + ATP + H(+) = adenosine 5'-phosphosulfate + diphosphate. Its pathway is sulfur metabolism; hydrogen sulfide biosynthesis; sulfite from sulfate: step 1/3. Functionally, with CysD forms the ATP sulfurylase (ATPS) that catalyzes the adenylation of sulfate producing adenosine 5'-phosphosulfate (APS) and diphosphate, the first enzymatic step in sulfur assimilation pathway. APS synthesis involves the formation of a high-energy phosphoric-sulfuric acid anhydride bond driven by GTP hydrolysis by CysN coupled to ATP hydrolysis by CysD. In Escherichia coli O139:H28 (strain E24377A / ETEC), this protein is Sulfate adenylyltransferase subunit 1.